We begin with the raw amino-acid sequence, 329 residues long: MAALGGDGLRLLSVSRPERPPESAALGGLGPGLCCWVSVFSCLSLACSYVGSLYVWKSELPRDHPAVIKRRFTSVLVVSSLSPLCVLLWRELTGIQPGTSLLTLMGFRLEGIFPAALLPLLLTMILFLGPLMQLSMDCPCDLADGLKVVLAPRSWARCLTDMRWLRNQVIAPLTEELVFRACMLPMLAPCMGLGPAVFTCPLFFGVAHFHHIIEQLRFRQSSVGNIFLSAAFQFSYTAVFGAYTAFLFIRTGHLIGPVLCHSFCNYMGFPAVCAALEHPQRRPLLAGYALGVGLFLLLLQPLTDPKLYGSLPLCVLLERAGDSEAPLCS.

Ala2 bears the N-acetylalanine mark. 3 helical membrane passes run 25–45, 75–95, and 112–132; these read ALGG…CLSL, VLVV…LTGI, and IFPA…GPLM. Glu175 acts as the Proton donor/acceptor in catalysis. The chain crosses the membrane as a helical span at residues 186 to 206; it reads MLAPCMGLGPAVFTCPLFFGV. His208 functions as the Proton donor/acceptor in the catalytic mechanism. The next 3 helical transmembrane spans lie at 229–249, 254–274, and 283–303; these read SAAF…FLFI, LIGP…AVCA, and PLLA…QPLT.

It belongs to the peptidase U48 family. Ubiquitinated. Undergoes 'Lys-48'- and 'Lys-63'-linked ubiquitination. 'Lys-48' ubiquitination induces its degradation. Deubiquitinated by USP17L2/USP17 that cleaves 'Lys-63'-linked ubiquitin chains. As to expression, ubiquitous.

The protein resides in the endoplasmic reticulum membrane. It catalyses the reaction Hydrolyzes the peptide bond -P2-(S-farnesyl or geranylgeranyl)C-P1'-P2'-P3'-COOH where P1' and P2' are amino acids with aliphatic sidechains and P3' is any C-terminal residue.. Its activity is regulated as follows. Deubiquitination by USP17L2/USP17 negatively regulates the proteolytic activity toward Ras GTPases. In terms of biological role, protease involved in the processing of a variety of prenylated proteins containing the C-terminal CAAX motif, where C is a cysteine modified with an isoprenoid lipid, A is an aliphatic amino acid and X is any C-terminal amino acid. Proteolytically removes the C-terminal three residues of farnesylated and geranylated proteins, leaving the prenylated cysteine as the new C-terminus. Is able to process K-Ras, N-Ras, H-Ras, RAP1B and G-gamma-1. The sequence is that of CAAX prenyl protease 2 (RCE1) from Homo sapiens (Human).